The following is a 270-amino-acid chain: Molybdenum-pterin-binding protein MopB (270 aa).

Mop domains follow at residues 131-197 (RTSA…LLAG) and 203-269 (RLSV…ILAL).

This sequence belongs to the ModE family.

In Rhodobacter capsulatus (Rhodopseudomonas capsulata), this protein is Molybdenum-pterin-binding protein MopB (mopB).